Here is a 419-residue protein sequence, read N- to C-terminus: UDP-N-acetylglucosamine 1-carboxyvinyltransferase (419 aa).

22–23 (KN) lines the phosphoenolpyruvate pocket. Arg-93 serves as a coordination point for UDP-N-acetyl-alpha-D-glucosamine. Cys-117 (proton donor) is an active-site residue. At Cys-117 the chain carries 2-(S-cysteinyl)pyruvic acid O-phosphothioketal. Residues Asp-307 and Ile-329 each coordinate UDP-N-acetyl-alpha-D-glucosamine.

Belongs to the EPSP synthase family. MurA subfamily.

It localises to the cytoplasm. The catalysed reaction is phosphoenolpyruvate + UDP-N-acetyl-alpha-D-glucosamine = UDP-N-acetyl-3-O-(1-carboxyvinyl)-alpha-D-glucosamine + phosphate. The protein operates within cell wall biogenesis; peptidoglycan biosynthesis. Functionally, cell wall formation. Adds enolpyruvyl to UDP-N-acetylglucosamine. The sequence is that of UDP-N-acetylglucosamine 1-carboxyvinyltransferase from Shewanella piezotolerans (strain WP3 / JCM 13877).